The sequence spans 92 residues: Large ribosomal subunit protein bL28 (92 aa).

This sequence belongs to the bacterial ribosomal protein bL28 family.

The polypeptide is Large ribosomal subunit protein bL28 (Borreliella afzelii (strain PKo) (Borrelia afzelii)).